Consider the following 356-residue polypeptide: Phosphate acyltransferase (356 aa).

The protein belongs to the PlsX family. As to quaternary structure, homodimer. Probably interacts with PlsY.

The protein resides in the cytoplasm. It carries out the reaction a fatty acyl-[ACP] + phosphate = an acyl phosphate + holo-[ACP]. It functions in the pathway lipid metabolism; phospholipid metabolism. In terms of biological role, catalyzes the reversible formation of acyl-phosphate (acyl-PO(4)) from acyl-[acyl-carrier-protein] (acyl-ACP). This enzyme utilizes acyl-ACP as fatty acyl donor, but not acyl-CoA. This chain is Phosphate acyltransferase, found in Mesorhizobium japonicum (strain LMG 29417 / CECT 9101 / MAFF 303099) (Mesorhizobium loti (strain MAFF 303099)).